The chain runs to 103 residues: Large ribosomal subunit protein bL21 (103 aa).

Belongs to the bacterial ribosomal protein bL21 family. As to quaternary structure, part of the 50S ribosomal subunit. Contacts protein L20.

In terms of biological role, this protein binds to 23S rRNA in the presence of protein L20. This is Large ribosomal subunit protein bL21 from Chloroflexus aggregans (strain MD-66 / DSM 9485).